The following is a 351-amino-acid chain: Autoinducer 2 import system permease protein LsrC (351 aa).

The next 9 helical transmembrane spans lie at 14–34, 39–59, 70–90, 93–113, 115–135, 155–175, 213–233, 252–272, and 284–304; these read LLAI…YFSL, MIFS…LVML, ITGL…GLVA, LFAL…VTWL, IPAI…MLLL, ILFS…AMAW, MNGV…GFIP, GISL…AFLL, and LPAW…LVFD.

The protein belongs to the binding-protein-dependent transport system permease family. AraH/RbsC subfamily. The complex is composed of two ATP-binding proteins (LsrA), two transmembrane proteins (LsrC and LsrD) and a solute-binding protein (LsrB).

The protein localises to the cell inner membrane. In terms of biological role, part of the ABC transporter complex LsrABCD involved in autoinducer 2 (AI-2) import. Probably responsible for the translocation of the substrate across the membrane. The chain is Autoinducer 2 import system permease protein LsrC (lsrC) from Yersinia pseudotuberculosis serotype O:3 (strain YPIII).